An 878-amino-acid chain; its full sequence is Bifunctional heparan sulfate N-deacetylase/N-sulfotransferase 1 (878 aa).

Residues 1-17 (MSLSLKTRRFGRPVRPQ) are Cytoplasmic-facing. The tract at residues 1 to 169 (MSLSLKTRRF…VEYGVGIIGF (169 aa)) is sufficient for localization to Golgi membrane. A helical; Signal-anchor for type II membrane protein membrane pass occupies residues 18-38 (LVLLLLFALCLLSVFISAYYL). Residues 39–878 (YGWKRGLEPS…WLREELQSTR (840 aa)) are Lumenal-facing. A heparan sulfate N-deacetylase 1 region spans residues 40–594 (GWKRGLEPSG…KRHKDIWSKE (555 aa)). Residues 47–71 (PSGSEAQSPDCDEPKISPSRLLPMK) are disordered. 3 N-linked (GlcNAc...) asparagine glycosylation sites follow: N231, N347, and N397. The interval 595–878 (KTCDRFPKLL…WLREELQSTR (284 aa)) is heparan sulfate N-sulfotransferase 1. Catalysis depends on K610, which acts as the For sulfotransferase activity. An adenosine 3',5'-bisphosphate-binding site is contributed by 610-614 (KTGTT). N663 carries an N-linked (GlcNAc...) asparagine glycan. 2 residues coordinate adenosine 3',5'-bisphosphate: S708 and W813. Residues C814 and C824 are joined by a disulfide bond. Adenosine 3',5'-bisphosphate is bound at residue 829–833 (KGRKY).

This sequence belongs to the sulfotransferase 1 family. NDST subfamily. Monomer.

It is found in the golgi apparatus membrane. The protein localises to the golgi apparatus. It localises to the trans-Golgi network membrane. The catalysed reaction is alpha-D-glucosaminyl-[heparan sulfate](n) + 3'-phosphoadenylyl sulfate = N-sulfo-alpha-D-glucosaminyl-[heparan sulfate](n) + adenosine 3',5'-bisphosphate + 2 H(+). The protein operates within glycan metabolism; heparan sulfate biosynthesis. Its pathway is glycan metabolism; heparin biosynthesis. Essential bifunctional enzyme that catalyzes both the N-deacetylation and the N-sulfation of glucosamine (GlcNAc) of the glycosaminoglycan in heparan sulfate. Modifies the GlcNAc-GlcA disaccharide repeating sugar backbone to make N-sulfated heparosan, a prerequisite substrate for later modifications in heparin biosynthesis. Plays a role in determining the extent and pattern of sulfation of heparan sulfate. The polypeptide is Bifunctional heparan sulfate N-deacetylase/N-sulfotransferase 1 (ndst1) (Xenopus tropicalis (Western clawed frog)).